The chain runs to 209 residues: U1 small nuclear ribonucleoprotein C (209 aa).

Residues 4-36 (HYCDYCDVFLTHDSASVRKAHNSGRNHLANVRD) form a Matrin-type zinc finger. The segment covering 72 to 87 (PQHLQAPPQGGFAPPM) has biased composition (low complexity). Residues 72–209 (PQHLQAPPQG…RARMMGPGGR (138 aa)) form a disordered region. Pro residues-rich tracts occupy residues 93–150 (GGFP…PFPP) and 159–191 (PGAP…PTNP).

The protein belongs to the U1 small nuclear ribonucleoprotein C family. U1 snRNP is composed of the 7 core Sm proteins B/B', D1, D2, D3, E, F and G that assemble in a heptameric protein ring on the Sm site of the small nuclear RNA to form the core snRNP, and at least 3 U1 snRNP-specific proteins U1-70K, U1-A and U1-C. U1-C interacts with U1 snRNA and the 5' splice-site region of the pre-mRNA.

The protein resides in the nucleus. Its function is as follows. Component of the spliceosomal U1 snRNP, which is essential for recognition of the pre-mRNA 5' splice-site and the subsequent assembly of the spliceosome. U1-C is directly involved in initial 5' splice-site recognition for both constitutive and regulated alternative splicing. The interaction with the 5' splice-site seems to precede base-pairing between the pre-mRNA and the U1 snRNA. Stimulates commitment or early (E) complex formation by stabilizing the base pairing of the 5' end of the U1 snRNA and the 5' splice-site region. This chain is U1 small nuclear ribonucleoprotein C, found in Coprinopsis cinerea (strain Okayama-7 / 130 / ATCC MYA-4618 / FGSC 9003) (Inky cap fungus).